The primary structure comprises 203 residues: MQDRFLKENTEIINLSSSIHPNRDSYLDSQSDPLNQNLYNIETENVKDLNIEDVDYYEKLQNFKIVDENIDPGLRTYSKRSVGVNNTFQNPCNRKIEGYIKEIERLSNSNKNLQAAVLQMAVSDTDDPRLKEEYKQTEKELLREISGNHKSKILKLEEELNDLKHSMKEMQLYMTKIIDKAMNNASLENLFSLDENNTKIHDK.

Positions 92–177 (CNRKIEGYIK…KEMQLYMTKI (86 aa)) form a coiled coil.

The protein resides in the cytoplasm. In terms of biological role, has a role in meiosis and sporulation. The protein is Meiotically up-regulated protein PB17E12.09 of Schizosaccharomyces pombe (strain 972 / ATCC 24843) (Fission yeast).